The sequence spans 220 residues: Inner membrane-spanning protein YciB (220 aa).

Helical transmembrane passes span 20-40 (EVPP…FFFA), 57-77 (IGAP…IALA), 86-106 (LPIM…LTLW), 123-143 (LFGG…GYVF), 156-176 (KLTL…EIVW), and 187-207 (FKVW…MPLI).

It belongs to the YciB family.

It is found in the cell inner membrane. Functionally, plays a role in cell envelope biogenesis, maintenance of cell envelope integrity and membrane homeostasis. In Brucella abortus (strain S19), this protein is Inner membrane-spanning protein YciB.